The sequence spans 59 residues: Large ribosomal subunit protein bL32 (59 aa).

The tract at residues 1 to 20 (MAVQQNKKSRSRKGMRRSHD) is disordered. Over residues 7–19 (KKSRSRKGMRRSH) the composition is skewed to basic residues.

It belongs to the bacterial ribosomal protein bL32 family.

This chain is Large ribosomal subunit protein bL32, found in Nitratidesulfovibrio vulgaris (strain ATCC 29579 / DSM 644 / CCUG 34227 / NCIMB 8303 / VKM B-1760 / Hildenborough) (Desulfovibrio vulgaris).